Consider the following 541-residue polypeptide: MSDQAPSVKPPAFGPGVVVKGTWHPDYAEVLTPEALEFVAKLARNFGERRLALLERRKTVQAAWSKGARPHFLPETKAVREGDWTVAPLPADLQDRRVEITGPVDRKMVINALNSGANVFMADFEDANSPTWDNVVRGQINLRDAVRGTISFTAENGKHYALNPKRAVLFVRPRGWHLPERHIEIDGKPISGSLLDFGLFFFHNAREQLARGTGPYFYLPKMQSHLEARLWNDVFHLAQAELGIPRGTIKATVLIETLPAAFEMDEILYELREHSAGLNCGRWDYIFSFIKTLQSDTRVVLPDRGQVTMDKAFLNAYSQLLIQTCHRRNVHAMGGMAAFIPIKGDAAANDAVMDKVRADKLREVKNGHDGTWVAHPGLVEIARDIFDSHMKGPNQLSNKREDVKIGEAELLKVPSGTRTEEGLRHNIRVGIQYTAAWLGGLGCVPLYNLMEDAATAEISRAQVWQWIHHGASLEDGRKVTLTLFRDALGEEMGRLEKEGAKERYGAAHLERARVLFEQLSTAGTFEDFLTLPAYDALEAQR.

The active-site Proton acceptor is the Arg-172. Asp-452 (proton donor) is an active-site residue.

This sequence belongs to the malate synthase family.

Its subcellular location is the cytoplasm. It carries out the reaction glyoxylate + acetyl-CoA + H2O = (S)-malate + CoA + H(+). It functions in the pathway carbohydrate metabolism; glyoxylate cycle; (S)-malate from isocitrate: step 2/2. This chain is Malate synthase (mls), found in Myxococcus xanthus (strain DK1622).